The following is a 134-amino-acid chain: Profilin-3 (134 aa).

An intrachain disulfide couples Cys13 to Cys118. Residues Ala84–Thr100 carry the Involved in PIP2 interaction motif. Thr114 carries the post-translational modification Phosphothreonine.

It belongs to the profilin family. Occurs in many kinds of cells as a complex with monomeric actin in a 1:1 ratio. Phosphorylated by MAP kinases.

The protein resides in the cytoplasm. It localises to the cytoskeleton. Binds to actin and affects the structure of the cytoskeleton. At high concentrations, profilin prevents the polymerization of actin, whereas it enhances it at low concentrations. In Olea europaea (Common olive), this protein is Profilin-3.